The chain runs to 444 residues: Mitogen-activated protein kinase mpk-1 (444 aa).

2 stretches are compositionally biased toward polar residues: residues 1–17 (MPTW…TTRN) and 24–56 (GHPQ…HVRQ). The tract at residues 1–56 (MPTWIPNNLCAQPTTRNAKPPSNGHPQATQQQSAPGSLAYRNSSNIPNGATNHVRQ) is disordered. The 289-residue stretch at 96–384 (YVNLSYIGEG…IEQALAHPYL (289 aa)) folds into the Protein kinase domain. ATP-binding positions include 102-110 (IGEGAYGMV) and Lys-125. The active-site Proton acceptor is the Asp-220. Residue Thr-256 is modified to Phosphothreonine. A TXY motif is present at residues 256–258 (TEY). The residue at position 258 (Tyr-258) is a Phosphotyrosine.

The protein belongs to the protein kinase superfamily. CMGC Ser/Thr protein kinase family. MAP kinase subfamily. Isoform a interacts with gck-1 (via N-terminus). Requires Mg(2+) as cofactor. Post-translationally, isoform a is phosphorylated at the pachytene stage during oogenesis and is negatively regulated by gck-1. Isoform b is phosphorylated in proximal oocytes. Expressed in cells lining the rectum. Isoform a is expressed in nervous system, body wall muscles and posterior intestine. Isoform b expression may be restricted to germline.

It carries out the reaction L-seryl-[protein] + ATP = O-phospho-L-seryl-[protein] + ADP + H(+). The enzyme catalyses L-threonyl-[protein] + ATP = O-phospho-L-threonyl-[protein] + ADP + H(+). With respect to regulation, activated by dual phosphorylation at Thr-256 and Tyr-258. May be inactivated by lip-1-mediated dephosphorylation. Functionally, functions in let-60 Ras signaling pathway; acts downstream of lin-45 raf kinase, but before the lin-1 gene product in controlling vulval cell differentiation. Plays a negative role in proximal germline proliferation in the mitotic zone. Required for progression of developing oocytes through the pachytene stage, perhaps acting after efl-1/dpl-1-mediated gene activation and before gld-1 down-regulation. May play a role in global X chromosome reactivation or be indirectly required for progression of germ cells through meiosis to the point where X reactivation occurs. In oocytes, inhibits the activity of the chloride channel clh-3, likely by activating gck-3. Plays a role in response to M.nematophilum-mediated bacterial infection by promoting tail swelling and preventing constipation. Involved in fluid homeostasis. In addition, involved in the up-regulation of lysozyme ilys-3 expression in the intestine in responses to M.nematophilum-mediated bacterial infection. By phosphorylating transcription factor skn-1 (isoform c) may play a role in increasing life span downstream of lin-45, let-60 and mek-2. By up-regulating cep-1 and down-regulating gld-1 expression in the late pachytene stage, plays a role in germline apoptosis in response to DNA damage. Regulates egl-1 expression in response to DNA damage, probably upstream of cep-1. Its function is as follows. Suppresses germline tumor formation by preventing the dedifferentiation of secondary spermatocytes probably upstream of rskn-1. This chain is Mitogen-activated protein kinase mpk-1 (mpk-1), found in Caenorhabditis elegans.